A 1039-amino-acid chain; its full sequence is Multidrug resistance protein MdtB (1039 aa).

12 consecutive transmembrane segments (helical) span residues 16–36 (FILR…AGII), 342–362 (DVQF…YVFL), 373–393 (VAVP…GFSI), 396–416 (LTLM…IVVI), 440–460 (IGFT…PLLF), 472–492 (FAVT…TLTP), 537–557 (WLTL…YLLI), 863–883 (LGGT…VLGV), 888–908 (FIHP…ALLA), 911–931 (MAGS…IGIV), 968–988 (ILMT…STGV), and 1002–1022 (GGLV…YLLF).

The protein belongs to the resistance-nodulation-cell division (RND) (TC 2.A.6) family. MdtB subfamily. Part of a tripartite efflux system composed of MdtA, MdtB and MdtC. MdtB forms a heteromultimer with MdtC.

Its subcellular location is the cell inner membrane. The sequence is that of Multidrug resistance protein MdtB from Serratia proteamaculans (strain 568).